Here is a 352-residue protein sequence, read N- to C-terminus: tRNA N6-adenosine threonylcarbamoyltransferase (352 aa).

Residues His109 and His113 each contribute to the Fe cation site. Substrate is bound by residues 136 to 140 (TVSGG), Asp169, Gly182, Asp186, and Asn284. Residue Asp312 participates in Fe cation binding.

The protein belongs to the KAE1 / TsaD family. Requires Fe(2+) as cofactor.

Its subcellular location is the cytoplasm. It carries out the reaction L-threonylcarbamoyladenylate + adenosine(37) in tRNA = N(6)-L-threonylcarbamoyladenosine(37) in tRNA + AMP + H(+). Its function is as follows. Required for the formation of a threonylcarbamoyl group on adenosine at position 37 (t(6)A37) in tRNAs that read codons beginning with adenine. Is involved in the transfer of the threonylcarbamoyl moiety of threonylcarbamoyl-AMP (TC-AMP) to the N6 group of A37, together with TsaE and TsaB. TsaD likely plays a direct catalytic role in this reaction. The chain is tRNA N6-adenosine threonylcarbamoyltransferase from Chloroherpeton thalassium (strain ATCC 35110 / GB-78).